The sequence spans 1042 residues: Glutamate dehydrogenase 2 (1042 aa).

Lys596 is an active-site residue. Arg763 bears the ADP-ribosylarginine; by Legionella Lart1 mark.

It belongs to the Glu/Leu/Phe/Val dehydrogenases family. As to quaternary structure, homodimer. In terms of processing, (Microbial infection) ADP-ribosylated at Arg-763 by the Legionella pneumophila effector Lart1, which inhibits the glutamate dehydrogenase activity. Amoeba are natural hosts of Legionella, and ADP-ribosylation by Lart1 may promote Legionella parasitism.

The protein resides in the cytoplasm. The catalysed reaction is L-glutamate + NAD(+) + H2O = 2-oxoglutarate + NH4(+) + NADH + H(+). Its activity is regulated as follows. Activity is stimulated by AMP. With respect to regulation, (Microbial infection) Inhibited by ADP-ribosylation. The polypeptide is Glutamate dehydrogenase 2 (glud2) (Dictyostelium discoideum (Social amoeba)).